The following is a 271-amino-acid chain: MGYVKVVKTSPYFSRYQVKYRRRRQGKTDYRARLRLVRQDKNKYNTHKYRLVVRFSNKNVTCQIVYSTIQGDVVMAAAYSKELPNYGLKVGLTNYSAAYCVGLLVARRILTKLNLADTYKGQEEPDGEDYNVEPVEDGPKPFYCLLDTGLKRTSTGSKVFAAMKGALDGGLDIPHNEKRFVGYADKKLDTEVLQKYIYGGHVAEYQETMQEEEPEKYQAHFSSYVENEIEPDGIEDMYKEVHAKIRENPCPPKKERTKPADAKRWSPQAHL.

Positions 245–264 are enriched in basic and acidic residues; sequence IRENPCPPKKERTKPADAKR. A disordered region spans residues 245–271; that stretch reads IRENPCPPKKERTKPADAKRWSPQAHL.

This sequence belongs to the universal ribosomal protein uL18 family. In terms of assembly, component of the large ribosomal subunit (LSU).

The protein resides in the cytoplasm. Its subcellular location is the nucleus. Component of the ribosome, a large ribonucleoprotein complex responsible for the synthesis of proteins in the cell. The small ribosomal subunit (SSU) binds messenger RNAs (mRNAs) and translates the encoded message by selecting cognate aminoacyl-transfer RNA (tRNA) molecules. The large subunit (LSU) contains the ribosomal catalytic site termed the peptidyl transferase center (PTC), which catalyzes the formation of peptide bonds, thereby polymerizing the amino acids delivered by tRNAs into a polypeptide chain. The nascent polypeptides leave the ribosome through a tunnel in the LSU and interact with protein factors that function in enzymatic processing, targeting, and the membrane insertion of nascent chains at the exit of the ribosomal tunnel. In Dunaliella salina (Green alga), this protein is Large ribosomal subunit protein uL18 (RPL5).